A 246-amino-acid polypeptide reads, in one-letter code: Polyhedrin (246 aa).

It belongs to the polyhedrin family.

Its function is as follows. Major component of the virus occlusion bodies, which are large proteinaceous structures (polyhedra), that protect the virus from the outside environment for extended periods until they are ingested by insect larvae. The protein is Polyhedrin (PH) of Lepidoptera (butterflies and moths).